The primary structure comprises 951 residues: Leucine-rich repeat-containing G-protein coupled receptor 4 (951 aa).

The signal sequence occupies residues 1–19 (MPGPLGLLCFLALGLRGSA). Over 20 to 544 (EPSGAAPPLC…LLGSWMIRLT (525 aa)) the chain is Extracellular. The region spanning 25-57 (APPLCAAPCSCDGDRRVDCSGKGLTAVPEGLSA) is the LRRNT domain. 2 disulfides stabilise this stretch: C29-C35 and C33-C43. 11 LRR repeats span residues 35 to 58 (CDGDRRVDCSGKGLTAVPEGLSAF), 59 to 79 (TQLLDISMNNITQLPEDAFKN), 81 to 103 (PFLEELRLAGNDLSFIHPKALSG), 104 to 127 (LKELKVLTLQNNQLKTVPSEAIRG), 128 to 151 (LSSLQSLRLDANHITSVPEDSFEG), 153 to 175 (TQLRHLWLDDNSLTEVPVHPLSN), 176 to 199 (LPTLQALTLALNKISSIPDFAFTN), 201 to 223 (SSLVVLHLHNNKIKSLGQHCFDG), 224 to 247 (LDNLETLDLNYNNLGEFPQAIKAL), 248 to 270 (PSLKELLFHSNSISVIPDGAFDG), and 272 to 294 (PLLKTIHLYDNPLSFVGNSAFHN). N68 carries N-linked (GlcNAc...) asparagine glycosylation. N199 is a glycosylation site (N-linked (GlcNAc...) asparagine). N294 and N314 each carry an N-linked (GlcNAc...) asparagine glycan. 5 LRR repeats span residues 318–341 (TVRLESLTLTGTKISSISNNLCQE), 342–363 (QKRLRTLDLSYNSIKDLPSFNG), 364–387 (CHALEEISLQRNQIHQIKEDTFQG), 388–411 (LTSLKILDLSRNLIHEIDDRAFAK), and 413–435 (GSITNLDVSFNELTSFPTEGLNG). C339 and C364 are oxidised to a cystine. Disulfide bonds link C470–C522 and C471–C476. Residues 545-565 (VWFIFLVALFFNLLVILTTFA) traverse the membrane as a helical segment. At 566–575 (SCTSVPSSKL) the chain is on the cytoplasmic side. The helical transmembrane segment at 576–596 (FIGLISVSNLFMGAYTGILTF) threads the bilayer. Residues 597–619 (LDAVSWGRFAEFGIWWEIGSGCK) lie on the Extracellular side of the membrane. A disulfide bond links C618 and C693. A helical transmembrane segment spans residues 620–640 (IAGFLAVFSSESAIFLLMLAA). Residues 641 to 661 (VERSLSAKDMMKNGKSNHLRQ) lie on the Cytoplasmic side of the membrane. A helical transmembrane segment spans residues 662 to 682 (FRIAALLAFLGAAVAGSFPLF). Over 683 to 703 (HRGEYSASPLCLPFPTGETPS) the chain is Extracellular. A helical transmembrane segment spans residues 704–724 (LGFTVTLVLLNSLAFLLMAII). Residues 725-756 (YTKLYCNLEKEDLSESSQSSMIKHVAWLIFTN) lie on the Cytoplasmic side of the membrane. A helical membrane pass occupies residues 757–777 (CIFFCPVAFFSFAPLITAVSI). Over 778–783 (SPEIMK) the chain is Extracellular. The chain crosses the membrane as a helical span at residues 784 to 804 (SVTLIFFPLPACLNPVLYVFF). Residues 805–951 (NPKFKEDWKL…YAYNLPRVKD (147 aa)) lie on the Cytoplasmic side of the membrane. S920 carries the phosphoserine modification.

This sequence belongs to the G-protein coupled receptor 1 family.

The protein localises to the cell membrane. Its function is as follows. Receptor for R-spondins that potentiates the canonical Wnt signaling pathway and is involved in the formation of various organs. Upon binding to R-spondins (RSPO1, RSPO2, RSPO3 or RSPO4), associates with phosphorylated LRP6 and frizzled receptors that are activated by extracellular Wnt receptors, triggering the canonical Wnt signaling pathway to increase expression of target genes. In contrast to classical G-protein coupled receptors, does not activate heterotrimeric G-proteins to transduce the signal. Its function as activator of the Wnt signaling pathway is required for the development of various organs, including liver, kidney, intestine, bone, reproductive tract and eye. May also act as a receptor for norrin (NDP), such results however required additional confirmation in vivo. Required during spermatogenesis to activate the Wnt signaling pathway in peritubular myoid cells. Required for the maintenance of intestinal stem cells and Paneth cell differentiation in postnatal intestinal crypts. Acts as a regulator of bone formation and remodeling. Involved in kidney development; required for maintaining the ureteric bud in an undifferentiated state. Involved in the development of the anterior segment of the eye. Required during erythropoiesis. Also acts as a negative regulator of innate immunity by inhibiting TLR2/TLR4 associated pattern-recognition and pro-inflammatory cytokine production. Plays an important role in regulating the circadian rhythms of plasma lipids, partially through regulating the rhythmic expression of MTTP. Required for proper development of GnRH neurons (gonadotropin-releasing hormone expressing neurons) that control the release of reproductive hormones from the pituitary gland. In Bos taurus (Bovine), this protein is Leucine-rich repeat-containing G-protein coupled receptor 4 (LGR4).